The following is a 404-amino-acid chain: Plasma serine protease inhibitor (404 aa).

An N-terminal signal peptide occupies residues 1 to 19 (MRLCLFLCLVLLGPRMATL). Residues 20-24 (RRSQK) constitute a propeptide, removed in mature form. T35 and T36 each carry an O-linked (GalNAc...) threonine glycan. N-linked (GlcNAc...) asparagine glycosylation is found at N245, N258, and N334.

The protein belongs to the serpin family. As to quaternary structure, forms protease inhibiting heterodimers in extracellular body fluids with serine proteases such as activated protein C/coagulation factor V/F5, acrosin/ACR, chymotrypsinogen B/CTRB1, prothrombin/F2, factor Xa/F10, factor XI/F11, kallikrein/KLKB1, tissue kallikrein, trypsin/PRSS1, prostate specific antigen/KLK3, tissue plasminogen activator/PLAT and urinary plasminogen activator/PLAU. Forms membrane-anchored serine proteases inhibiting heterodimers with TMPRSS7 and TMPRSS11E. Interacts with SEMG2. In terms of processing, N-glycosylated; glycans consist of a mixture of sialylated bi- (including sialyl-Lewis X epitopes), tri- and tetra-antennary complex-type chains; affects the maximal heparin- and thrombomodulin-enhanced rates of thrombin inhibition. O-glycosylated; further modified with 2 sialic acid residues. Proteolytically cleaved at the N-terminus; inhibits slightly the heparin- and thrombomodulin-enhanced rates of thrombin inhibition. N- and O-glycosylated. Proteolytically cleaved. Inhibition of proteases is accompanied by formation of a stable enzyme-inhibitor complex and by degradation of the serpin to lower molecular weight derivatives. As to expression, expressed strongly in the liver, and moderately in the kidney and testis, but not in other tissues tested.

The protein localises to the secreted. The protein resides in the extracellular space. Its activity is regulated as follows. Its inhibitory activity is greatly enhanced in the presence of glycosaminoglycans, heparin, thrombomodulin and phospholipids vesicles. Heparin-dependent serine protease inhibitor acting in body fluids and secretions. Inactivates serine proteases by binding irreversibly to their serine activation site. Involved in the regulation of intravascular and extravascular proteolytic activities. Plays hemostatic roles in the blood plasma. Acts as a procoagulant and pro-inflammatory factor by inhibiting the anticoagulant activated protein C factor as well as the generation of activated protein C factor by the thrombin/thrombomodulin complex. Acts as an anticoagulant factor by inhibiting blood coagulation factors like prothrombin, factor XI, factor Xa, plasma kallikrein and fibrinolytic enzymes such as tissue- and urinary-type plasminogen activators. In seminal plasma, inactivates several serine proteases implicated in the reproductive system. Inhibits the serpin acrosin; indirectly protects component of the male genital tract from being degraded by excessive released acrosin. Inhibits tissue- and urinary-type plasminogen activator, prostate-specific antigen and kallikrein activities; has a control on the sperm motility and fertilization. Inhibits the activated protein C-catalyzed degradation of SEMG1 and SEMG2; regulates the degradation of semenogelin during the process of transfer of spermatozoa from the male reproductive tract into the female tract. In urine, inhibits urinary-type plasminogen activator and kallikrein activities. Inactivates membrane-anchored serine proteases activities such as MPRSS7 and TMPRSS11E. Inhibits urinary-type plasminogen activator-dependent tumor cell invasion and metastasis. May also play a non-inhibitory role in seminal plasma and urine as a hydrophobic hormone carrier by its binding to retinoic acid. This Bos taurus (Bovine) protein is Plasma serine protease inhibitor (SERPINA5).